An 810-amino-acid polypeptide reads, in one-letter code: DNA replication licensing factor mcm-6 (810 aa).

The MCM domain occupies 346–553 (IEKNIVDSLF…VTDYAIARRI (208 aa)). 6 residues coordinate ATP: Ser400, Thr401, Ala402, Lys403, Ser404, and Asn505. The Arginine finger signature appears at 529 to 532 (SRFD). Arg622 and Glu625 together coordinate ADP. The disordered stretch occupies residues 685 to 705 (KENQGGDDDMEHDGEKDETAK).

Belongs to the MCM family. Component of the mcm2-7 complex. The complex forms a toroidal hexameric ring with the proposed subunit order mcm2-mcm6-mcm4-mcm7-mcm3-mcm5 (By simililarity).

Its subcellular location is the nucleus. It carries out the reaction ATP + H2O = ADP + phosphate + H(+). Its function is as follows. Acts as a component of the MCM2-7 complex (MCM complex) which is the replicative helicase essential for 'once per cell cycle' DNA replication initiation and elongation in eukaryotic cells. Core component of CDC45-MCM-GINS (CMG) helicase, the molecular machine that unwinds template DNA during replication, and around which the replisome is built. The active ATPase sites in the MCM2-7 ring are formed through the interaction surfaces of two neighboring subunits such that a critical structure of a conserved arginine finger motif is provided in trans relative to the ATP-binding site of the Walker A box of the adjacent subunit. The six ATPase active sites, however, are likely to contribute differentially to the complex helicase activity. The polypeptide is DNA replication licensing factor mcm-6 (Caenorhabditis briggsae).